The chain runs to 690 residues: Wilms tumor protein 1-interacting protein homolog (690 aa).

Disordered regions lie at residues 151 to 316 (MSAT…VSPR) and 328 to 372 (TLGS…PRSS). The segment covering 152 to 186 (SATSPRSSMASSASSSQEHSKYSSPRSSISSNALS) has biased composition (low complexity). Polar residues-rich tracts occupy residues 204–214 (EKYTSPRSSLG), 223–233 (PRSSYASTTSD), 240–261 (PRAS…TSGI), and 272–292 (PRSS…SYSD). Residues 335 to 357 (SVVSPRSSISSHSSRSSRSSRGS) show a composition bias toward low complexity. LIM zinc-binding domains are found at residues 479 to 540 (GICI…SGFQ), 544 to 603 (DKCF…TVFA), and 604 to 673 (PKCA…RLSV).

Belongs to the zyxin/ajuba family. As to quaternary structure, interacts with prickle3.

The protein localises to the cell junction. Its subcellular location is the adherens junction. It localises to the nucleus. Functionally, may monitor slit diaphragm protein assembly, a specialized adherens junction characteristic of podocytes. In case of podocyte injury, it shuttles into the nucleus and acts as a transcription regulator. Plays a role in the regulation of cell morphology and cytoskeletal organization. Acts as a transcriptional corepressor for snai1 and snai2/slug and plays a role in regulating neural crest development. Involved in the organization of the basal body. Involved in cilia growth and positioning. The polypeptide is Wilms tumor protein 1-interacting protein homolog (wtip) (Xenopus laevis (African clawed frog)).